A 209-amino-acid polypeptide reads, in one-letter code: Thymidylate kinase (209 aa).

An ATP-binding site is contributed by 11–18; sequence GPDGAGKT.

Belongs to the thymidylate kinase family.

It catalyses the reaction dTMP + ATP = dTDP + ADP. Functionally, phosphorylation of dTMP to form dTDP in both de novo and salvage pathways of dTTP synthesis. The polypeptide is Thymidylate kinase (Streptococcus thermophilus (strain ATCC BAA-250 / LMG 18311)).